The primary structure comprises 125 residues: Putative superoxide reductase (125 aa).

Residues Glu-12, His-14, His-40, His-46, Cys-110, and His-113 each contribute to the Fe cation site.

It belongs to the desulfoferrodoxin family. The cofactor is Fe cation.

It carries out the reaction reduced [rubredoxin] + superoxide + 2 H(+) = oxidized [rubredoxin] + H2O2. Functionally, uses electrons from reduced NADP, by way of rubredoxin and an oxidoreductase, to catalyze the reduction of superoxide to hydrogen peroxide. In Archaeoglobus fulgidus (strain ATCC 49558 / DSM 4304 / JCM 9628 / NBRC 100126 / VC-16), this protein is Putative superoxide reductase.